We begin with the raw amino-acid sequence, 281 residues long: CDAN1-interacting nuclease 1 (281 aa).

Its subcellular location is the nucleus. The protein localises to the cytoplasm. Functionally, plays a role in erythroid cell differentiation. This Bos taurus (Bovine) protein is CDAN1-interacting nuclease 1 (CDIN1).